Consider the following 386-residue polypeptide: S-adenosylmethionine synthase (386 aa).

Residue histidine 16 coordinates ATP. Aspartate 18 lines the Mg(2+) pocket. Glutamate 44 serves as a coordination point for K(+). Residues glutamate 57 and glutamine 100 each coordinate L-methionine. Positions 100–110 (QSRDIAQGVDR) are flexible loop. Residues 165-167 (DAK), aspartate 240, 246-247 (RK), alanine 263, and lysine 267 contribute to the ATP site. An L-methionine-binding site is contributed by aspartate 240. An L-methionine-binding site is contributed by lysine 271.

The protein belongs to the AdoMet synthase family. In terms of assembly, homotetramer; dimer of dimers. Mg(2+) is required as a cofactor. The cofactor is K(+).

The protein localises to the cytoplasm. It catalyses the reaction L-methionine + ATP + H2O = S-adenosyl-L-methionine + phosphate + diphosphate. The protein operates within amino-acid biosynthesis; S-adenosyl-L-methionine biosynthesis; S-adenosyl-L-methionine from L-methionine: step 1/1. Functionally, catalyzes the formation of S-adenosylmethionine (AdoMet) from methionine and ATP. The overall synthetic reaction is composed of two sequential steps, AdoMet formation and the subsequent tripolyphosphate hydrolysis which occurs prior to release of AdoMet from the enzyme. The protein is S-adenosylmethionine synthase of Francisella tularensis subsp. holarctica (strain FTNF002-00 / FTA).